Consider the following 601-residue polypeptide: Protein FREE1 (601 aa).

Residues 1-240 (MQQGDYNSYY…SGEYPAFEDS (240 aa)) are disordered. Pro residues predominate over residues 21–35 (TPNPNPNPNPSPPAP). Polar residues-rich tracts occupy residues 63 to 79 (DYSNYSQNYTPYGQNSE) and 125 to 155 (LSSYGSFDSTAPYQQPTSQHMYYSPYDQHQT). Positions 161–175 (APPPSSAPAPNPNPA) are enriched in pro residues. The segment covering 176-197 (PYSSSLYSAPPYSSGGSSIPPS) has biased composition (low complexity). Over residues 214-231 (NRSRSDLGSDLYGKRSDS) the composition is skewed to basic and acidic residues. Ser-218 carries the post-translational modification Phosphoserine. Residues 338-344 (LDGLRML) are nuclear export signal. Residues 455–515 (DEAVSKCTSC…VCDRCMAEVS (61 aa)) form an FYVE-type zinc finger. Residues Cys-461, Cys-464, Cys-477, Cys-480, Cys-485, Cys-488, Cys-507, and Cys-510 each coordinate Zn(2+). Residues 527 to 552 (RNVSLQSHEDLARKLQEEMERNRKSS) are a coiled coil. A phosphoserine mark is found at Ser-530 and Ser-533. The tract at residues 542 to 561 (QEEMERNRKSSSGLREGSGR) is disordered.

Part of the ESCRT-I complex. Interacts with VPS23A and VPS23B, but not with VPS28 or VPS37. Interacts with IRT1. Interacts with SH3P2. Interacts with SH3P3, but not with SH3P1. Interacts (via N-terminus) with PYL4 and PYR3. Interacts (via C-terminus) with SNRK2D/SNRK2.2, SNRK2I/SNRK2.3, ABF4 and ABI5. Interacts with SINAT1, SINAT2, SINAT3 and SINAT4. Interacts with SINAT5. Component of a phosphoinositide 3-kinase (PI3K) complex containing ATG6, SH3P2 and FREE1. Post-translationally, phosphorylated at Ser-530 and Ser-533 by SNRK2D/SNRK2.2 and SNRK2I/SNRK2.3 in response to abscisic acid (ABA). Phosphorylation is necessary for ABA-induced FREE1 nuclear import. In terms of processing, ubiquitinated by SINAT1, SINAT2, SINAT3 and SINAT4 for subsequent proteasomal degradation. Ubiquitous. Lowest expression in mature seeds.

The protein resides in the cytoplasm. It is found in the prevacuolar compartment membrane. The protein localises to the late endosome. It localises to the endosome. Its subcellular location is the multivesicular body. The protein resides in the nucleus. In terms of biological role, endosomal sorting complex required for transport (ESCRT) component regulating multivesicular body (MVB) protein sorting and plant growth. Required for the formation of intra-luminal vesicles (ILVs)in MVBs. Binds to phosphatidylinositol-3-phosphate (PI3P) and ubiquitin. Controls IRT1 recycling to the plasma membrane and impacts the polar delivery of this transporter to the outer plasma membrane domain. Regulates ubiquitin-dependent membrane protein degradation, vacuolar transport, autophagy, and vacuole biogenesis. ESCRT component that binds ubiquitin and regulates vacuolar sorting of proteins. Attenuates abscisic acid (ABA) signaling through RSL1-triggered degradation of the ABA receptors PYR1 and PYL4. Interacts with PYL4 and PYR1, and delivers the ubiquitinated ABA receptors as cargo to the vacuolar degradation pathway. In response to ABA, is phosphorylated by SnRK2 kinases which mediate FREE1 nuclear import. In the nucleus, interacts with the ABA-responsive transcription factors ABF4 and ABI5 to reduce their ability to bind to their cis-regulatory sequences of downstream genes, thus leading to transcriptional inhibition of ABA signaling pathway. Negatively regulates salt stress tolerance via a negative feedback loop involving ABA signaling pathway. The polypeptide is Protein FREE1 (Arabidopsis thaliana (Mouse-ear cress)).